We begin with the raw amino-acid sequence, 106 residues long: uncharacterized protein (106 aa).

Positions 28 to 68 (SSANEPKKLPNKKLVSTKSHTQVNREKSKNKDTYEDYSDSN) are disordered. Basic and acidic residues predominate over residues 50 to 61 (VNREKSKNKDTY).

This is an uncharacterized protein from Acanthamoeba polyphaga (Amoeba).